A 602-amino-acid chain; its full sequence is ATP-dependent RNA helicase DeaD (602 aa).

Residues 6–34 (MTFSSFGLNSCIITALNDIGYVQPSPIQA) carry the Q motif motif. One can recognise a Helicase ATP-binding domain in the interval 37-208 (IPYLIKGKDV…RRFMKNPKEI (172 aa)). 50–57 (AQTGSGKT) is a binding site for ATP. The short motif at 156-159 (DEAD) is the DEAD box element. The Helicase C-terminal domain maps to 231 to 378 (KTDALIRFLE…EVNLPKSDFL (148 aa)).

Belongs to the DEAD box helicase family. DeaD/CsdA subfamily.

The protein resides in the cytoplasm. The catalysed reaction is ATP + H2O = ADP + phosphate + H(+). DEAD-box RNA helicase involved in various cellular processes at low temperature, including ribosome biogenesis, mRNA degradation and translation initiation. This is ATP-dependent RNA helicase DeaD from Buchnera aphidicola subsp. Baizongia pistaciae (strain Bp).